The sequence spans 382 residues: Galactokinase (382 aa).

Substrate is bound at residue 34-37 (EHTD). 124-130 (GAGLSSS) contacts ATP. Mg(2+) is bound by residues Ser-130 and Glu-162. The active-site Proton acceptor is the Asp-174. Tyr-223 is a substrate binding site.

It belongs to the GHMP kinase family. GalK subfamily.

It is found in the cytoplasm. The catalysed reaction is alpha-D-galactose + ATP = alpha-D-galactose 1-phosphate + ADP + H(+). Its pathway is carbohydrate metabolism; galactose metabolism. Functionally, catalyzes the transfer of the gamma-phosphate of ATP to D-galactose to form alpha-D-galactose-1-phosphate (Gal-1-P). In Shigella boydii serotype 18 (strain CDC 3083-94 / BS512), this protein is Galactokinase.